We begin with the raw amino-acid sequence, 430 residues long: uncharacterized protein (430 aa).

It localises to the cytoplasm. The protein localises to the nucleus. This is an uncharacterized protein from Schizosaccharomyces pombe (strain 972 / ATCC 24843) (Fission yeast).